The chain runs to 212 residues: Uridine kinase (212 aa).

13–20 lines the ATP pocket; sequence GGSGSGKT.

This sequence belongs to the uridine kinase family.

It localises to the cytoplasm. It carries out the reaction uridine + ATP = UMP + ADP + H(+). The enzyme catalyses cytidine + ATP = CMP + ADP + H(+). Its pathway is pyrimidine metabolism; CTP biosynthesis via salvage pathway; CTP from cytidine: step 1/3. It participates in pyrimidine metabolism; UMP biosynthesis via salvage pathway; UMP from uridine: step 1/1. The protein is Uridine kinase of Bacillus cereus (strain ATCC 10987 / NRS 248).